Consider the following 491-residue polypeptide: Probable aspartyl aminopeptidase (491 aa).

A Zn(2+)-binding site is contributed by His90. His168 contributes to the substrate binding site. Residue Asp278 coordinates Zn(2+). Residue Glu315 participates in substrate binding. Zn(2+) is bound by residues Glu316 and Asp361. Positions 361, 364, 389, and 396 each coordinate substrate. A Zn(2+)-binding site is contributed by His455.

It belongs to the peptidase M18 family. Tetrahedron-shaped homododecamer built from six homodimers. Requires Zn(2+) as cofactor.

The protein resides in the cytoplasm. It carries out the reaction Release of an N-terminal aspartate or glutamate from a peptide, with a preference for aspartate.. In terms of biological role, likely to play an important role in intracellular protein and peptide metabolism. This Ricinus communis (Castor bean) protein is Probable aspartyl aminopeptidase.